The following is a 217-amino-acid chain: Ribonuclease HII (217 aa).

One can recognise an RNase H type-2 domain in the interval 27 to 216 (SRVAGVDEAG…VKESIQEGVC (190 aa)). The a divalent metal cation site is built by D33, E34, and D126.

It belongs to the RNase HII family. It depends on Mn(2+) as a cofactor. Mg(2+) is required as a cofactor.

Its subcellular location is the cytoplasm. It carries out the reaction Endonucleolytic cleavage to 5'-phosphomonoester.. Endonuclease that specifically degrades the RNA of RNA-DNA hybrids. The polypeptide is Ribonuclease HII (Chlamydia trachomatis serovar A (strain ATCC VR-571B / DSM 19440 / HAR-13)).